The following is a 122-amino-acid chain: MRKMQYRSHRLSEELKKEISKMILEEIKDPRIKAMVSITDIEVTKDLRYAKVYVSIYGSEEEKRETFEGLKSAAGYIRHEIGRRIKMRYTPEIIFELDHSIEYGAKISEILKELNKQEGDDN.

This sequence belongs to the RbfA family. Monomer. Binds 30S ribosomal subunits, but not 50S ribosomal subunits or 70S ribosomes.

It is found in the cytoplasm. Its function is as follows. One of several proteins that assist in the late maturation steps of the functional core of the 30S ribosomal subunit. Associates with free 30S ribosomal subunits (but not with 30S subunits that are part of 70S ribosomes or polysomes). Required for efficient processing of 16S rRNA. May interact with the 5'-terminal helix region of 16S rRNA. This is Ribosome-binding factor A from Caldanaerobacter subterraneus subsp. tengcongensis (strain DSM 15242 / JCM 11007 / NBRC 100824 / MB4) (Thermoanaerobacter tengcongensis).